The sequence spans 90 residues: Translation initiation factor IF-1 2 (90 aa).

An S1-like domain is found at 1 to 72 (MAKEELLELD…TKGRINFRHK (72 aa)).

Belongs to the IF-1 family. As to quaternary structure, component of the 30S ribosomal translation pre-initiation complex which assembles on the 30S ribosome in the order IF-2 and IF-3, IF-1 and N-formylmethionyl-tRNA(fMet); mRNA recruitment can occur at any time during PIC assembly.

The protein resides in the cytoplasm. Its function is as follows. One of the essential components for the initiation of protein synthesis. Stabilizes the binding of IF-2 and IF-3 on the 30S subunit to which N-formylmethionyl-tRNA(fMet) subsequently binds. Helps modulate mRNA selection, yielding the 30S pre-initiation complex (PIC). Upon addition of the 50S ribosomal subunit IF-1, IF-2 and IF-3 are released leaving the mature 70S translation initiation complex. The polypeptide is Translation initiation factor IF-1 2 (Paraburkholderia xenovorans (strain LB400)).